The following is a 519-amino-acid chain: Maturase K (519 aa).

The protein belongs to the intron maturase 2 family. MatK subfamily.

The protein localises to the plastid. It localises to the chloroplast. In terms of biological role, usually encoded in the trnK tRNA gene intron. Probably assists in splicing its own and other chloroplast group II introns. This is Maturase K from Cycas panzhihuaensis (Dukou cycad).